Consider the following 225-residue polypeptide: MAATQEDVKLLGIVGSPFVCRVQIALKLKGVEYKFLEENLGNKSDLLLKYNPVHKKVPVFVHNEQPIAESLVIVEYIDETWKNNPILPSDPYQRALARFWSKFIDDKIVGAVSKSVFTVDEKEREKNVEETYEALQFLENELKDKKFFGGEEFGLVDIAAVFIAFWIPIFQEIAGLQLFTSEKFPILYKWSQEFLNHPFVHEVLPPRDPLFAYFKARYESLSASK.

Residues 6–85 (EDVKLLGIVG…YIDETWKNNP (80 aa)) enclose the GST N-terminal domain. Residues S16, K43, V57, and 69–70 (ES) each bind glutathione. The GST C-terminal domain occupies 90-214 (DPYQRALARF…PPRDPLFAYF (125 aa)).

Belongs to the GST superfamily. HSP26 family.

The enzyme catalyses RX + glutathione = an S-substituted glutathione + a halide anion + H(+). Functionally, may play a role in the cellular response to stress. The polypeptide is Probable glutathione S-transferase (HSP26-A) (Glycine max (Soybean)).